The chain runs to 320 residues: Olfactory receptor 51E2 (320 aa).

Residues Met-1–Gly-27 are Extracellular-facing. Asn-5 is a glycosylation site (N-linked (GlcNAc...) asparagine). A helical membrane pass occupies residues Phe-28–Val-48. Over Arg-49–Ser-53 the chain is Cytoplasmic. The helical transmembrane segment at Leu-54 to Thr-74 threads the bilayer. At Ser-75 to Ala-98 the chain is on the extracellular side. The cysteines at positions 96 and 178 are disulfide-linked. Residues Gln-99–Phe-119 form a helical membrane-spanning segment. The Cytoplasmic segment spans residues Asp-120–Val-141. Residues Gln-142–Ile-162 traverse the membrane as a helical segment. Residues Lys-163–Thr-200 lie on the Extracellular side of the membrane. A helical transmembrane segment spans residues Ala-201–Ile-221. The Cytoplasmic segment spans residues Arg-222–Thr-239. The chain crosses the membrane as a helical span at residues Cys-240–Val-260. The Extracellular segment spans residues His-261–Pro-269. The helical transmembrane segment at Ile-270–Ile-290 threads the bilayer. At Tyr-291–Thr-320 the chain is on the cytoplasmic side.

It belongs to the G-protein coupled receptor 1 family. In brain, expressed in medulla oblongata by cells close to the fourth ventricle, in the area postrema, the nucleus tractus solitarius. Expressed in olfactory epithelium and vomeronasal organ. Expressed in kidney by large renal vessels, renal afferent arterioles, and extrarenal vascular beds. In small resistance vessels the expression is restricted to cells of the juxtaglomerular afferent arteriole, which mediate renin secretion. Also detected in small blood vessels in a variety of tissues including heart, diaphragm, skeletal muscle, and skin. In the heart, esophagus, and stomach it is detected in axons of autonomic neurons and neurons of the enteric plexus. Also detected in colon and liver. Expressed in the glomus cells of the carotid body.

It localises to the cell membrane. It is found in the early endosome membrane. Olfactory receptor. The activity of this receptor is probably mediated by G-proteins which induce elevation of intracellular Ca(2+), cAMP and activation of phosphorylation of the protein kinases PKA and MAPK3/MAPK1. Activation of OR51E2 may affect melanocyte proliferation, differentiation, and melanogenesis and may increase proliferation and migration of primary retinal pigment epithelial (RPE) cells. Activated by the short chain fatty acids (SCFA), acetate and propionate. In response to SCFA, may positively regulate renin secretion and increase blood pressure. May also be activated by steroid hormones and regulate cell proliferation. Activated by L-lactate in glomus cells. In Mus musculus (Mouse), this protein is Olfactory receptor 51E2 (Or51e2).